A 247-amino-acid polypeptide reads, in one-letter code: ATP synthase subunit a, chloroplastic (247 aa).

5 helical membrane passes run 38-58, 95-115, 134-154, 199-219, and 220-240; these read QVLITSWVVIAILLGSATIAV, VPFIGTMFLFIFVSNWSGALL, INTTVALALLTSVAYFYAGLT, LVVVVLVSLVPSVVPIPVMFL, and GLFTSGIQALIFATLAAAYIG.

It belongs to the ATPase A chain family. F-type ATPases have 2 components, CF(1) - the catalytic core - and CF(0) - the membrane proton channel. CF(1) has five subunits: alpha(3), beta(3), gamma(1), delta(1), epsilon(1). CF(0) has four main subunits: a, b, b' and c.

It localises to the plastid. It is found in the chloroplast thylakoid membrane. In terms of biological role, key component of the proton channel; it plays a direct role in the translocation of protons across the membrane. The sequence is that of ATP synthase subunit a, chloroplastic from Buxus microphylla (Littleleaf boxwood).